A 617-amino-acid polypeptide reads, in one-letter code: Probable Xaa-Pro aminopeptidase P (617 aa).

Mn(2+) contacts are provided by Asp-414, Asp-425, Glu-523, and Glu-537.

The protein belongs to the peptidase M24B family. It depends on Mn(2+) as a cofactor.

It carries out the reaction Release of any N-terminal amino acid, including proline, that is linked to proline, even from a dipeptide or tripeptide.. Functionally, catalyzes the removal of a penultimate prolyl residue from the N-termini of peptides. In Colletotrichum graminicola (strain M1.001 / M2 / FGSC 10212) (Maize anthracnose fungus), this protein is Probable Xaa-Pro aminopeptidase P (AMPP).